The sequence spans 570 residues: Membrane protein insertase YidC (570 aa).

Positions 31 to 60 are enriched in polar residues; the sequence is QQPVAQTPSVTIDSNGADSSALLNSPNTGE. The segment at 31-79 is disordered; sequence QQPVAQTPSVTIDSNGADSSALLNSPNTGELDTPETASKPATAEDSNIS. Transmembrane regions (helical) follow at residues 230 to 250, 378 to 398, 444 to 464, 487 to 507, and 522 to 542; these read PTFSGGFGAASFLGAVVSTPE, WGIAIILLTVLIKALFFHLSA, LGGCLPMLVQMPVFISLYWVL, PYFVLPLLMGAAMFLQTSLNP, and PIIFTVFFLWFPAGLVLYWLV.

The protein belongs to the OXA1/ALB3/YidC family. Type 1 subfamily. Interacts with the Sec translocase complex via SecD. Specifically interacts with transmembrane segments of nascent integral membrane proteins during membrane integration.

It is found in the cell inner membrane. Functionally, required for the insertion and/or proper folding and/or complex formation of integral membrane proteins into the membrane. Involved in integration of membrane proteins that insert both dependently and independently of the Sec translocase complex, as well as at least some lipoproteins. Aids folding of multispanning membrane proteins. This Hahella chejuensis (strain KCTC 2396) protein is Membrane protein insertase YidC.